The primary structure comprises 218 residues: Large ribosomal subunit protein uL3 (218 aa).

This sequence belongs to the universal ribosomal protein uL3 family. In terms of assembly, part of the 50S ribosomal subunit. Forms a cluster with proteins L14 and L19.

In terms of biological role, one of the primary rRNA binding proteins, it binds directly near the 3'-end of the 23S rRNA, where it nucleates assembly of the 50S subunit. The polypeptide is Large ribosomal subunit protein uL3 (Mycolicibacterium gilvum (strain PYR-GCK) (Mycobacterium gilvum (strain PYR-GCK))).